A 687-amino-acid chain; its full sequence is Polyphosphate kinase (687 aa).

ATP is bound at residue Asn-45. Mg(2+)-binding residues include Arg-373 and Arg-403. His-433 serves as the catalytic Phosphohistidine intermediate. Tyr-466, Arg-562, and His-590 together coordinate ATP. In terms of domain architecture, PLD phosphodiesterase spans 585–615 (DRFLEHDRVYVFENKGDKLVYLSSADWMTRN).

Belongs to the polyphosphate kinase 1 (PPK1) family. Mg(2+) serves as cofactor. An intermediate of this reaction is the autophosphorylated ppk in which a phosphate is covalently linked to a histidine residue through a N-P bond.

The enzyme catalyses [phosphate](n) + ATP = [phosphate](n+1) + ADP. Catalyzes the reversible transfer of the terminal phosphate of ATP to form a long-chain polyphosphate (polyP). The protein is Polyphosphate kinase of Yersinia pestis.